The primary structure comprises 311 residues: Replicative helicase loader DnaI (311 aa).

The N-terminal domain (Nd) stretch occupies residues 1-136 (MEPIGRSLQG…LGATFQQVDI (136 aa)). Zn(2+) is bound by residues Cys-67, Cys-70, His-84, and Cys-101. Residues 137–311 (SDPSRLAMFQ…RLDGENRRHP (175 aa)) form a C-terminal domain (Cd) region. 168–175 (GKFGVGKT) is an ATP binding site.

The protein belongs to the DnaI family. As to quaternary structure, the DNA replisome assembles sequentially on oriC in this order; DnaA, DnaD, DnaB, DnaI-DnaC helicase. Monomer with a very minor amount of dimer in solution. Interacts with replicative helicase (from G.stearothermophilus, called DnaB); this interaction is disrupted by DnaD. Interacts with replicative helicase DnaC, forms a DnaC(6):DnaI(6) complex. Interacts with the helicase as 3 dimers. A stable complex with DnaG primase, DnaI(6):helicase(6):DnaG(3) fragment can be isolated; DnaI and DnaG do not contact each other (helicase and DnaG in this complex are derived from G.stearothermophilus). It depends on Zn(2+) as a cofactor.

It is found in the cytoplasm. It carries out the reaction ATP + H2O = ADP + phosphate + H(+). In terms of biological role, helps load the DnaC replicative helicase onto single-stranded (ss)DNA and simulates the helicase activity; in the presence of DnaB more helicase activity is seen. Regulates DnaC helicase activity, at low concentrations stimulates the DNA helicase and ATPase activities of DnaC. Has no measurable ATPase activity after 1 hour incubation of 6 uM DnaI with or without DNA. Another group has found the protein has weak ATPase activity that is not stimulated by ssDNA. Whole protein binds forked DNA (but not ssDNA) weakly; ATP and ADPNP (probably 5'-adenylyl beta, gamma-imidodiphosphate) have no effect on DNA binding. DnaB, DnaD and DnaI may be required for a PriA-independent pathway of replication fork restart. In Bacillus subtilis (strain 168), this protein is Replicative helicase loader DnaI.